The primary structure comprises 633 residues: 1-deoxy-D-xylulose-5-phosphate synthase (633 aa).

Thiamine diphosphate is bound by residues H72 and 113-115 (GHS). D144 contacts Mg(2+). Residues 145–146 (GA), N173, Y284, and E367 contribute to the thiamine diphosphate site. N173 lines the Mg(2+) pocket.

The protein belongs to the transketolase family. DXPS subfamily. In terms of assembly, homodimer. Requires Mg(2+) as cofactor. It depends on thiamine diphosphate as a cofactor.

The enzyme catalyses D-glyceraldehyde 3-phosphate + pyruvate + H(+) = 1-deoxy-D-xylulose 5-phosphate + CO2. The protein operates within metabolic intermediate biosynthesis; 1-deoxy-D-xylulose 5-phosphate biosynthesis; 1-deoxy-D-xylulose 5-phosphate from D-glyceraldehyde 3-phosphate and pyruvate: step 1/1. Its function is as follows. Catalyzes the acyloin condensation reaction between C atoms 2 and 3 of pyruvate and glyceraldehyde 3-phosphate to yield 1-deoxy-D-xylulose-5-phosphate (DXP). In Bacillus licheniformis (strain ATCC 14580 / DSM 13 / JCM 2505 / CCUG 7422 / NBRC 12200 / NCIMB 9375 / NCTC 10341 / NRRL NRS-1264 / Gibson 46), this protein is 1-deoxy-D-xylulose-5-phosphate synthase.